The chain runs to 918 residues: Plasma membrane ATPase 1 (918 aa).

Over residues 1 to 18 (MTDTSSSSSSSSASSVSA) the composition is skewed to low complexity. Residues 1–84 (MTDTSSSSSS…VPEEYLQTDP (84 aa)) form a disordered region. Over 1-115 (MTDTSSSSSS…ADEKESLVVK (115 aa)) the chain is Cytoplasmic. Acidic residues predominate over residues 33-47 (AASESSDDDDIDALI). A Phosphoserine modification is found at Ser-61. A helical membrane pass occupies residues 116-136 (FVMFFVGPIQFVMEAAAILAA). The Extracellular segment spans residues 137-140 (GLSD). A helical membrane pass occupies residues 141 to 160 (WVDFGVICGLLMLNAGVGFV). Residues 161–291 (QEFQAGSIVD…GQGHFTEVLN (131 aa)) are Cytoplasmic-facing. A Phosphothreonine modification is found at Thr-175. Lys-252 participates in a covalent cross-link: Glycyl lysine isopeptide (Lys-Gly) (interchain with G-Cter in ubiquitin). A helical membrane pass occupies residues 292 to 313 (GIGIILLVLVIATLLLVWTACF). The Extracellular segment spans residues 314 to 325 (YRTNGIVRILRY). A helical membrane pass occupies residues 326-347 (TLGITIIGVPVGLPAVVTTTMA). Residues 348 to 719 (VGAAYLAKKQ…IAILDNSLDI (372 aa)) lie on the Cytoplasmic side of the membrane. Asp-378 functions as the 4-aspartylphosphate intermediate in the catalytic mechanism. Lys-555 participates in a covalent cross-link: Glycyl lysine isopeptide (Lys-Gly) (interchain with G-Cter in ubiquitin). Residues Asp-634 and Asp-638 each coordinate Mg(2+). The chain crosses the membrane as a helical span at residues 720 to 738 (DLIVFIAIFADVATLAIAY). Residues 739–754 (DNAPYSPKPVKWNLPR) are Extracellular-facing. The chain crosses the membrane as a helical span at residues 755-774 (LWGMSIILGIVLAIGSWITL). Over 775–824 (TTMFLPKGGIIQNFGAMNGIMFLQISLTENWLIFITRAAGPFWSSIPSWQ) the chain is Cytoplasmic. Residues 825–845 (LAGAVFAVDIIATMFTLFGWW) traverse the membrane as a helical segment. Over 846–857 (SENWTDIVTVVR) the chain is Extracellular. The helical transmembrane segment at 858 to 874 (VWIWSIGIFCVLGGFYY) threads the bilayer. Over 875–918 (EMSTSEAFDRLMNGKPMKEKKSTRSVEDFMAAMQRVSTQHEKET) the chain is Cytoplasmic. Phosphoserine is present on Ser-911. Thr-912 and Thr-918 each carry phosphothreonine.

Belongs to the cation transport ATPase (P-type) (TC 3.A.3) family. Type IIIA subfamily. In terms of assembly, interacts with its cargot receptor EXP1 for its transport within the cell and maturation. Post-translationally, phosphorylated on multiple Ser and Thr residues.

It is found in the cell membrane. It carries out the reaction ATP + H2O + H(+)(in) = ADP + phosphate + 2 H(+)(out). Its function is as follows. The plasma membrane ATPase of plants and fungi is a hydrogen ion pump. The proton gradient it generates drives the active transport of nutrients by H(+)-symport. The resulting external acidification and/or internal alkinization may mediate growth responses. In Saccharomyces cerevisiae (strain ATCC 204508 / S288c) (Baker's yeast), this protein is Plasma membrane ATPase 1 (PMA1).